The chain runs to 193 residues: Cytidylate kinase (193 aa).

12 to 20 (GLAGSGTTT) serves as a coordination point for ATP.

The protein belongs to the cytidylate kinase family. Type 2 subfamily.

The protein localises to the cytoplasm. It carries out the reaction CMP + ATP = CDP + ADP. The enzyme catalyses dCMP + ATP = dCDP + ADP. This chain is Cytidylate kinase, found in Thermococcus sibiricus (strain DSM 12597 / MM 739).